The primary structure comprises 216 residues: MMNKIHKDNRGVLIVISGPSGAGKGTICKALLEKHDDIFISVSATTRNPRVGEVDGVNYHFLTKEEFKQRIAEDDFLEHAEVYGNYYGTPKSSVEKMLDEGKNVILEIDIQGALKVKEKATDGVFIFILPPSMEELKQRIIKRGSETPESLMTRFKSAYKEINYVSKYNYAVVNDNVEDAVKKIEAILLAEKCRVDRLKENLLESKEDEMHEQLYD.

The Guanylate kinase-like domain maps to 11–189; the sequence is GVLIVISGPS…AVKKIEAILL (179 aa). 18 to 25 serves as a coordination point for ATP; sequence GPSGAGKG.

This sequence belongs to the guanylate kinase family.

It localises to the cytoplasm. It carries out the reaction GMP + ATP = GDP + ADP. Essential for recycling GMP and indirectly, cGMP. The protein is Guanylate kinase of Clostridium perfringens (strain ATCC 13124 / DSM 756 / JCM 1290 / NCIMB 6125 / NCTC 8237 / Type A).